The following is a 288-amino-acid chain: Pyridoxal kinase PdxY (288 aa).

Substrate is bound by residues serine 12 and 47–48; that span reads TQ. ATP-binding positions include aspartate 114, glutamate 151, lysine 184, and 211–214; that span reads RPLL. Aspartate 225 serves as a coordination point for substrate.

This sequence belongs to the pyridoxine kinase family. PdxY subfamily. In terms of assembly, homodimer. It depends on Mg(2+) as a cofactor.

The enzyme catalyses pyridoxal + ATP = pyridoxal 5'-phosphate + ADP + H(+). It functions in the pathway cofactor metabolism; pyridoxal 5'-phosphate salvage; pyridoxal 5'-phosphate from pyridoxal: step 1/1. Functionally, pyridoxal kinase involved in the salvage pathway of pyridoxal 5'-phosphate (PLP). Catalyzes the phosphorylation of pyridoxal to PLP. The polypeptide is Pyridoxal kinase PdxY (Pseudomonas aeruginosa (strain UCBPP-PA14)).